A 276-amino-acid chain; its full sequence is Large ribosomal subunit protein uL2 (276 aa).

Residues 225–276 (VMNPVDHPHGGGEGKTAAGRDPVSPWGTPTKGYRTRSNKRTDSMIVQKRHKR) form a disordered region.

This sequence belongs to the universal ribosomal protein uL2 family. In terms of assembly, part of the 50S ribosomal subunit. Forms a bridge to the 30S subunit in the 70S ribosome.

Its function is as follows. One of the primary rRNA binding proteins. Required for association of the 30S and 50S subunits to form the 70S ribosome, for tRNA binding and peptide bond formation. It has been suggested to have peptidyltransferase activity; this is somewhat controversial. Makes several contacts with the 16S rRNA in the 70S ribosome. The protein is Large ribosomal subunit protein uL2 of Cupriavidus taiwanensis (strain DSM 17343 / BCRC 17206 / CCUG 44338 / CIP 107171 / LMG 19424 / R1) (Ralstonia taiwanensis (strain LMG 19424)).